We begin with the raw amino-acid sequence, 61 residues long: Neurotoxin-like protein 1 (61 aa).

4 cysteine pairs are disulfide-bonded: cysteine 3/cysteine 24, cysteine 17/cysteine 38, cysteine 42/cysteine 53, and cysteine 54/cysteine 59.

In terms of tissue distribution, expressed by the venom gland.

The protein localises to the secreted. The protein is Neurotoxin-like protein 1 of Causus rhombeatus (Rhombic night adder).